The sequence spans 187 residues: Alpha-D-galactose-binding lectin (187 aa).

Positions 1–37 (MTFAKQSCFNSIILLSIATSYFKIGHKISELGNRIEK) are cleaved as a signal peptide. Threonine 39 carries the post-translational modification N-acetylthreonine. N-acetyl-alpha-D-galactosamine contacts are provided by residues 53–56 (HPKG), aspartate 64, 72–76 (DIHER), histidine 101, glycine 104, glutamate 112, 120–122 (DRH), histidine 145, glycine 148, glutamate 156, and 164–166 (DKH).

As to quaternary structure, homodimer. In terms of tissue distribution, highest expression in the posterior part of the mantle. Highly expressed in gills and to a lesser extent in mid mantle and anterior muscle. Lowest expression in digestive gland and posterior adductor muscle. Scarcely detectable in hemocytes.

Agglutination of E.coli is inhibited by alpha-galactoside melibiose, but not by beta-galactoside lactose. In terms of biological role, alpha-D-galactose-binding lectin. Binds D-GalNAc, but not glucose or its derivatives. Has hemagglutinating activity towards rabbit erythrocytes. Agglutinates bacteria. Has bacteriostatic activity on both Gram-positive and Gram-negative bacteria including B.subtilis, S.aureus, E.coli and V.parahaemolyticus, respectively. Has a dose-dependent cytotoxic effect on the human globotriaosylceramide (Gb3)-expressing Epstein-Barr virus (EBV)-positive Burkitt's lymphoma (Raji) cell line. Has dose-dependent cytotoxic effect on another Burkitt's lymphoma (Ramos) cell line, which does not possess the EBV genome, but also expresses Gb3. Binds to Gb3 in these cells leading to phosphorylation of MEK1/2, ERK1/2, JNK and p38 kinase, activation of caspase-9/3 and to expression of p21 and tumor necrosis factor (TNF)-alpha. No cytotoxic effect on the human chronic myelogenous leukemia (K-562) cell line, which does not express Gb3. May be involved in innate immunity acting as an antibacterial or antifungal agent. May be a pattern recognition receptor (PRR) involved in recognition of glycans found on parasitic or symbiotic microorganisms. The sequence is that of Alpha-D-galactose-binding lectin from Mytilus galloprovincialis (Mediterranean mussel).